The following is a 513-amino-acid chain: Zinc finger CCCH-type with G patch domain-containing protein (513 aa).

A C3H1-type zinc finger spans residues 155–178; the sequence is PCSYYLEGECRFDEAKCRFSHGAL. A compositionally biased stretch (acidic residues) spans 252 to 261; that stretch reads DQDEDDELSS. Residues 252–283 are disordered; that stretch reads DQDEDDELSSEESNSSMNDNSSDEAESDMDDL. Residues 262 to 271 are compositionally biased toward low complexity; the sequence is EESNSSMNDN. Residues 272 to 283 show a composition bias toward acidic residues; it reads SSDEAESDMDDL. The region spanning 312–358 is the G-patch domain; that stretch reads TRGIGSKLMEKMGYIHGTGLGSDGRGIVTPVSAQILPQGRSLDACME. Over residues 478 to 495 the composition is skewed to polar residues; the sequence is VQMQSHKQELATLQAQER. The tract at residues 478–513 is disordered; that stretch reads VQMQSHKQELATLQAQERSLSKEQQTRKSKNKMFEF. Positions 496–513 are enriched in basic and acidic residues; the sequence is SLSKEQQTRKSKNKMFEF.

Its subcellular location is the nucleus. In terms of biological role, transcription repressor. The chain is Zinc finger CCCH-type with G patch domain-containing protein from Drosophila melanogaster (Fruit fly).